The sequence spans 158 residues: Probable transcription regulator ArfM (158 aa).

Activates, in anaerobic conditions, the transcription of the fermentative operons lctEP and alsDS, of the hmp gene encoding a flavohemoglobin-like protein, the nitrite reductase operon nasDE and the heme biosynthesis genes hemN and hemZ. The sequence is that of Probable transcription regulator ArfM (arfM) from Bacillus subtilis (strain 168).